Consider the following 291-residue polypeptide: Ribosomal RNA small subunit methyltransferase H (291 aa).

Residues G31–H33, D50, F77, D98, and Q105 each bind S-adenosyl-L-methionine.

The protein belongs to the methyltransferase superfamily. RsmH family.

It localises to the cytoplasm. It catalyses the reaction cytidine(1402) in 16S rRNA + S-adenosyl-L-methionine = N(4)-methylcytidine(1402) in 16S rRNA + S-adenosyl-L-homocysteine + H(+). Specifically methylates the N4 position of cytidine in position 1402 (C1402) of 16S rRNA. The polypeptide is Ribosomal RNA small subunit methyltransferase H (Endomicrobium trichonymphae).